Reading from the N-terminus, the 261-residue chain is tRNA pseudouridine synthase A (261 aa).

The active-site Nucleophile is the D51. Y109 contributes to the substrate binding site.

It belongs to the tRNA pseudouridine synthase TruA family. As to quaternary structure, homodimer.

The enzyme catalyses uridine(38/39/40) in tRNA = pseudouridine(38/39/40) in tRNA. In terms of biological role, formation of pseudouridine at positions 38, 39 and 40 in the anticodon stem and loop of transfer RNAs. This Shewanella baltica (strain OS155 / ATCC BAA-1091) protein is tRNA pseudouridine synthase A.